The following is a 365-amino-acid chain: Protein RecA (365 aa).

Residue 73–80 (GPESSGKT) participates in ATP binding.

It belongs to the RecA family.

The protein localises to the cytoplasm. Functionally, can catalyze the hydrolysis of ATP in the presence of single-stranded DNA, the ATP-dependent uptake of single-stranded DNA by duplex DNA, and the ATP-dependent hybridization of homologous single-stranded DNAs. It interacts with LexA causing its activation and leading to its autocatalytic cleavage. This Prochlorococcus marinus (strain AS9601) protein is Protein RecA.